Reading from the N-terminus, the 739-residue chain is Phosphoribosylformylglycinamidine synthase subunit PurL (739 aa).

H53 is an active-site residue. ATP contacts are provided by Y56 and K95. E97 is a Mg(2+) binding site. Substrate contacts are provided by residues 98 to 101 and R120; that span reads SHNH. H99 serves as the catalytic Proton acceptor. D121 contacts Mg(2+). A substrate-binding site is contributed by Q244. D274 provides a ligand contact to Mg(2+). 318 to 320 is a substrate binding site; sequence ESQ. Residues D501 and G538 each contribute to the ATP site. N539 provides a ligand contact to Mg(2+). S541 contributes to the substrate binding site.

Belongs to the FGAMS family. As to quaternary structure, monomer. Part of the FGAM synthase complex composed of 1 PurL, 1 PurQ and 2 PurS subunits.

It localises to the cytoplasm. The catalysed reaction is N(2)-formyl-N(1)-(5-phospho-beta-D-ribosyl)glycinamide + L-glutamine + ATP + H2O = 2-formamido-N(1)-(5-O-phospho-beta-D-ribosyl)acetamidine + L-glutamate + ADP + phosphate + H(+). The protein operates within purine metabolism; IMP biosynthesis via de novo pathway; 5-amino-1-(5-phospho-D-ribosyl)imidazole from N(2)-formyl-N(1)-(5-phospho-D-ribosyl)glycinamide: step 1/2. Functionally, part of the phosphoribosylformylglycinamidine synthase complex involved in the purines biosynthetic pathway. Catalyzes the ATP-dependent conversion of formylglycinamide ribonucleotide (FGAR) and glutamine to yield formylglycinamidine ribonucleotide (FGAM) and glutamate. The FGAM synthase complex is composed of three subunits. PurQ produces an ammonia molecule by converting glutamine to glutamate. PurL transfers the ammonia molecule to FGAR to form FGAM in an ATP-dependent manner. PurS interacts with PurQ and PurL and is thought to assist in the transfer of the ammonia molecule from PurQ to PurL. The protein is Phosphoribosylformylglycinamidine synthase subunit PurL of Listeria innocua serovar 6a (strain ATCC BAA-680 / CLIP 11262).